The sequence spans 197 residues: Translation machinery-associated protein 22 (197 aa).

One can recognise an SUI1 domain in the interval 103–174; it reads IRIKRVERNK…DVREFLIKNY (72 aa).

Belongs to the DENR family. As to quaternary structure, interacts with the 40S ribosomal subunit.

Its subcellular location is the cytoplasm. This is Translation machinery-associated protein 22 (tma22) from Botryotinia fuckeliana (strain B05.10) (Noble rot fungus).